Consider the following 65-residue polypeptide: DNA-directed RNA polymerase subunit Rpo10 (65 aa).

Zn(2+) contacts are provided by C7, C10, C44, and C45.

Belongs to the archaeal Rpo10/eukaryotic RPB10 RNA polymerase subunit family. In terms of assembly, part of the RNA polymerase complex. The cofactor is Zn(2+).

Its subcellular location is the cytoplasm. The enzyme catalyses RNA(n) + a ribonucleoside 5'-triphosphate = RNA(n+1) + diphosphate. DNA-dependent RNA polymerase (RNAP) catalyzes the transcription of DNA into RNA using the four ribonucleoside triphosphates as substrates. The sequence is that of DNA-directed RNA polymerase subunit Rpo10 from Thermococcus onnurineus (strain NA1).